A 387-amino-acid polypeptide reads, in one-letter code: MGGGGRMSTVITSNNSEKKGGSSHLKRAPHTKPPFTLGDLKRAIPPHCFERSFVRSFSYVAYDVCLSFLFYSIATNFFPYISSPLSYVAWLVYWLFQGCILTGLWVIGHECGHHAFSEYQLADDIVGLIVHSALLVPYFSWKYSHRRHHSNIGSLERDEVFVPKSKSKISWYSKYLNNPPGRVLTLAATLLLGWPLYLAFNVSGRPYDRFACHYDPYGPIFSERERLQIYIADLGIFATTFVLYQATMAKGLAWVMRIYGVPLLIVNCFLVMITYLQHTHPAIPRYGSSEWDWLRGAMVTVDRDYGVLNKVFHNIADTHVAHHLFATVPHYHAMEATKAIKPIMGEYYRYDGTPFYKALWREAKECLFVEPDEGAPTQGVFWYRNKY.

The disordered stretch occupies residues 1-34 (MGGGGRMSTVITSNNSEKKGGSSHLKRAPHTKPP). The next 2 helical transmembrane spans lie at 61–81 (AYDV…FPYI) and 88–108 (VAWL…WVIG). The short motif at 109 to 113 (HECGH) is the Histidine box-1 element. A helical transmembrane segment spans residues 121–141 (LADDIVGLIVHSALLVPYFSW). Residues 145–149 (HRRHH) carry the Histidine box-2 motif. Helical transmembrane passes span 183–203 (VLTL…FNVS), 229–249 (IYIA…ATMA), and 253–273 (AWVM…LVMI). The Histidine box-3 signature appears at 319-323 (HVAHH).

This sequence belongs to the fatty acid desaturase type 1 family. Expressed in seeds. Barely detected in leaves.

Its subcellular location is the microsome membrane. The catalysed reaction is a 1-acyl-2-(9Z)-octadecenoyl-sn-glycero-3-phosphocholine + 2 Fe(II)-[cytochrome b5] + O2 + 2 H(+) = a 1-acyl-2-[(R)-12-hydroxyoleoyl]-sn-glycero-3-phosphocholine + 2 Fe(III)-[cytochrome b5] + H2O. The protein operates within lipid metabolism; monounsaturated fatty acid biosynthesis. Inhibited by oleoyloxyethyl phosphocholine. In terms of biological role, oleoyl-12-hydroxylase involved in the biosynthesis of ricinoleate (12-hydroxy-cis-9-octadecenoate), the major fatty acid constituent of the oil seeds from castor bean plants. Catalyzes the hydroxylation at the 12-position of 1-acyl-2-oleoyl-sn-glycero-3-phosphocholine (2-oleoyl-PC), which seems to be the actual physiological subtrate. It uses cytochrome b5 as an electron donor. May also be involved in the production of lesquerolic acid (14-hydroxyeicos-cis-ll-enoic acid) in vitro. The sequence is that of Oleoyl-12-hydroxylase FAH12 from Ricinus communis (Castor bean).